We begin with the raw amino-acid sequence, 445 residues long: Sensor protein kinase CarS (445 aa).

The first 24 residues, 1–24 (MRSIQRRLSVGLFAVLLVVGLVLA), serve as a signal peptide directing secretion. Residues 150–170 (FARVQWMGLGAGALALLLVLL) form a helical membrane-spanning segment. Residues 177 to 228 (RRSLRPLEEVRLQIAQLQQGQRSQLDNQAPEELEPLVEQINHLLAHTEETLK) form the HAMP domain. The Histidine kinase domain occupies 236-438 (NLGHALKTPL…RVSVELPLQK (203 aa)). At H239 the chain carries Phosphohistidine; by autocatalysis.

Its subcellular location is the membrane. The catalysed reaction is ATP + protein L-histidine = ADP + protein N-phospho-L-histidine.. Functionally, member of the two-component regulatory system CarS/CarR that regulates the expression of multiple genes involved in calcium signaling and homeostasis including CarO and CarP. May function as a membrane-associated protein kinase that phosphorylates CarR in response to environmental signals leading to activation of specific gene promoters. This is Sensor protein kinase CarS (carS) from Pseudomonas aeruginosa (strain ATCC 15692 / DSM 22644 / CIP 104116 / JCM 14847 / LMG 12228 / 1C / PRS 101 / PAO1).